Consider the following 394-residue polypeptide: Argininosuccinate synthase (394 aa).

ATP is bound at residue 8 to 16 (AYSGGLDTS). Tyrosine 86 and serine 91 together coordinate L-citrulline. Glycine 116 contributes to the ATP binding site. Residues threonine 118, asparagine 122, and aspartate 123 each contribute to the L-aspartate site. Asparagine 122 contributes to the L-citrulline binding site. The L-citrulline site is built by arginine 126, serine 172, serine 181, glutamate 257, and tyrosine 269.

The protein belongs to the argininosuccinate synthase family. Type 1 subfamily. As to quaternary structure, homotetramer.

The protein resides in the cytoplasm. The catalysed reaction is L-citrulline + L-aspartate + ATP = 2-(N(omega)-L-arginino)succinate + AMP + diphosphate + H(+). Its pathway is amino-acid biosynthesis; L-arginine biosynthesis; L-arginine from L-ornithine and carbamoyl phosphate: step 2/3. This Methanosarcina acetivorans (strain ATCC 35395 / DSM 2834 / JCM 12185 / C2A) protein is Argininosuccinate synthase.